A 71-amino-acid chain; its full sequence is DNA-directed RNA polymerase subunit omega (71 aa).

It belongs to the RNA polymerase subunit omega family. The RNAP catalytic core consists of 2 alpha, 1 beta, 1 beta' and 1 omega subunit. When a sigma factor is associated with the core the holoenzyme is formed, which can initiate transcription.

The catalysed reaction is RNA(n) + a ribonucleoside 5'-triphosphate = RNA(n+1) + diphosphate. Its function is as follows. Promotes RNA polymerase assembly. Latches the N- and C-terminal regions of the beta' subunit thereby facilitating its interaction with the beta and alpha subunits. The chain is DNA-directed RNA polymerase subunit omega from Aromatoleum aromaticum (strain DSM 19018 / LMG 30748 / EbN1) (Azoarcus sp. (strain EbN1)).